We begin with the raw amino-acid sequence, 188 residues long: Probable RNA 2'-phosphotransferase (188 aa).

It belongs to the KptA/TPT1 family.

Removes the 2'-phosphate from RNA via an intermediate in which the phosphate is ADP-ribosylated by NAD followed by a presumed transesterification to release the RNA and generate ADP-ribose 1''-2''-cyclic phosphate (APPR&gt;P). May function as an ADP-ribosylase. In Lacticaseibacillus paracasei (strain ATCC 334 / BCRC 17002 / CCUG 31169 / CIP 107868 / KCTC 3260 / NRRL B-441) (Lactobacillus paracasei), this protein is Probable RNA 2'-phosphotransferase.